A 98-amino-acid polypeptide reads, in one-letter code: NADH-ubiquinone oxidoreductase chain 4L (98 aa).

The next 3 helical transmembrane spans lie at 1–21, 28–48, and 61–81; these read MASI…GVLI, STLL…TLLI, and LILL…LVTI.

It belongs to the complex I subunit 4L family. As to quaternary structure, core subunit of respiratory chain NADH dehydrogenase (Complex I) which is composed of 45 different subunits.

Its subcellular location is the mitochondrion inner membrane. The catalysed reaction is a ubiquinone + NADH + 5 H(+)(in) = a ubiquinol + NAD(+) + 4 H(+)(out). Its function is as follows. Core subunit of the mitochondrial membrane respiratory chain NADH dehydrogenase (Complex I) which catalyzes electron transfer from NADH through the respiratory chain, using ubiquinone as an electron acceptor. Part of the enzyme membrane arm which is embedded in the lipid bilayer and involved in proton translocation. The polypeptide is NADH-ubiquinone oxidoreductase chain 4L (MT-ND4L) (Thylamys elegans (Elegant fat-tailed mouse opossum)).